The chain runs to 1185 residues: 205 kDa microtubule-associated protein (1185 aa).

Low complexity predominate over residues 146-159 (EPNQLPEQLQQQQQ). A disordered region spans residues 146–196 (EPNQLPEQLQQQQQIESQGVHEDPRQEDEDEHSSVATTYGTSSLSENNSSP). Over residues 179 to 196 (SVATTYGTSSLSENNSSP) the composition is skewed to polar residues. A phosphoserine mark is found at Ser-354 and Ser-448. Tyr-450 carries the post-translational modification Phosphotyrosine. 3 positions are modified to phosphoserine: Ser-709, Ser-710, and Ser-712. Thr-721 carries the post-translational modification Phosphothreonine. A Phosphoserine modification is found at Ser-728. Positions 745–977 (TAADGQSISQ…ASTKVRPAAT (233 aa)) are microtubule-binding. Over residues 856-866 (SIATKTSTTSS) the composition is skewed to low complexity. 2 disordered regions span residues 856–1035 (SIAT…TSTA) and 1054–1114 (SASL…SSPA). Composition is skewed to polar residues over residues 867 to 881 (LTGNPRKSLSSNVGS) and 908 to 936 (TITNKPTASGTASDNVTRTTLRPLVSTNA). Ser-874 carries the post-translational modification Phosphoserine. Positions 940–952 (ATSGTGSVASSTA) are enriched in low complexity. A compositionally biased stretch (polar residues) spans 989–999 (PRSTISSTTTV). Residues 1003–1015 (PSTSTPSFSTRSP) show a composition bias toward low complexity. 2 stretches are compositionally biased toward polar residues: residues 1016-1026 (NKQQSNGLGKN) and 1054-1066 (SASLTYNNGSTSR). Residues Ser-1075 and Ser-1086 each carry the phosphoserine modification. Positions 1100–1111 (LTPQSKDGTAKS) are enriched in polar residues. Ser-1121 carries the post-translational modification Phosphoserine.

It is found in the cytoplasm. The protein localises to the cytoskeleton. It localises to the spindle. May play an important role in the regulation of microtubule assembly and interaction. In Drosophila melanogaster (Fruit fly), this protein is 205 kDa microtubule-associated protein (Map205).